The chain runs to 490 residues: Glutamate--tRNA ligase (490 aa).

Residues 9-19 carry the 'HIGH' region motif; it reads PSPTGLQHIGG. The short motif at 251-255 is the 'KMSKS' region element; it reads KLSKR. Lys254 contacts ATP.

The protein belongs to the class-I aminoacyl-tRNA synthetase family. Glutamate--tRNA ligase type 1 subfamily. In terms of assembly, monomer.

Its subcellular location is the cytoplasm. It carries out the reaction tRNA(Glu) + L-glutamate + ATP = L-glutamyl-tRNA(Glu) + AMP + diphosphate. Functionally, catalyzes the attachment of glutamate to tRNA(Glu) in a two-step reaction: glutamate is first activated by ATP to form Glu-AMP and then transferred to the acceptor end of tRNA(Glu). The polypeptide is Glutamate--tRNA ligase (Borreliella afzelii (strain PKo) (Borrelia afzelii)).